Here is a 79-residue protein sequence, read N- to C-terminus: Small ribosomal subunit protein uS17 (79 aa).

It belongs to the universal ribosomal protein uS17 family. Part of the 30S ribosomal subunit.

Its function is as follows. One of the primary rRNA binding proteins, it binds specifically to the 5'-end of 16S ribosomal RNA. The chain is Small ribosomal subunit protein uS17 from Bartonella tribocorum (strain CIP 105476 / IBS 506).